The sequence spans 63 residues: Movement protein TGBp3 (63 aa).

A helical membrane pass occupies residues 1–21 (MIVYVLVGLSAFCIVLYLISQ). The Cytoplasmic portion of the chain corresponds to 22–63 (GQSDCVVLITGESVRVQGCRIDGEFGSVLSKLKPFGCGSFRS).

Belongs to the Tymovirales TGBp3 protein family.

It localises to the host endoplasmic reticulum membrane. Plays a role in viral cell-to-cell propagation, by facilitating genome transport to neighboring plant cells through plasmosdesmata. May induce the formation of granular vesicles derived from the Endoplasmic reticulum, which align on actin filaments. The sequence is that of Movement protein TGBp3 from Solanum tuberosum (Potato).